Here is a 712-residue protein sequence, read N- to C-terminus: Ribosomal RNA large subunit methyltransferase K/L (712 aa).

The 112-residue stretch at 46-157 folds into the THUMP domain; that stretch reads GAYQALLHSR…REKLIVSLDL (112 aa).

Belongs to the methyltransferase superfamily. RlmKL family.

The protein resides in the cytoplasm. The enzyme catalyses guanosine(2445) in 23S rRNA + S-adenosyl-L-methionine = N(2)-methylguanosine(2445) in 23S rRNA + S-adenosyl-L-homocysteine + H(+). It carries out the reaction guanosine(2069) in 23S rRNA + S-adenosyl-L-methionine = N(2)-methylguanosine(2069) in 23S rRNA + S-adenosyl-L-homocysteine + H(+). In terms of biological role, specifically methylates the guanine in position 2445 (m2G2445) and the guanine in position 2069 (m7G2069) of 23S rRNA. The chain is Ribosomal RNA large subunit methyltransferase K/L from Haemophilus ducreyi (strain 35000HP / ATCC 700724).